The chain runs to 25 residues: Caerin-1.18 (25 aa).

Leucine amide is present on Leu25.

In terms of tissue distribution, expressed by the skin dorsal glands.

Its subcellular location is the secreted. In terms of biological role, shows significant activity against Gram-positive organisms, but is less effective against Gram-negative organisms. This chain is Caerin-1.18, found in Ranoidea gracilenta (Dainty green tree frog).